A 96-amino-acid polypeptide reads, in one-letter code: MAKMMQREITKTTVNVAKMVMVDGEVQVEQLPSETFVGNLSMEQAQWRMKRKYKGEPVQVVSVEPNTEVYELPVEKFLEVATVRVEKEDSEEQVAE.

A DNA-binding region spans residues 1–19 (MAKMMQREITKTTVNVAKM).

It belongs to the phi29likevirus histone-like protein p6 family. Homodimer. Homomultimer. Binds to double-stranded DNA giving rise to multimeric nucleoprotein complexes. Binding specificity for the viral DNA is based on supercoiling, the viral genome having a negative superhelicity lower than that of plasmid DNA. Interacts with the DNA replication protein p17; this interaction optimizes the binding of protein p6 at the viral DNA ends, thus favoring the initiation of replication.

Its function is as follows. Histone-like nucleoprotein that binds to the viral dsDNA and responsible for wrapping and compacting the viral DNA about 4-fold. Forms a nucleoprotein complex in which the DNA adopts a right-handed toroidal conformation winding around a protein core. Binds ito most, if not all, the viral genome, although with different affinity, the highest one corresponding to the genome ends. The formation of the nucleoprotein complex at the genome ends, activates the initiation of viral DNA replication. The binding of p6 would recruit the complex formed by the TP and the DNA polymerase to the origin. Protein p6 also represses early transcription from promoter C2, and, together with protein p4, represses transcription from promoters A2b and A2c and activates late transcription from promoter A3. Protein p6 is therefore involved in the early to late transcription switch. The formation of the nucleoprotein complex at the right end of the phage genome where the early promoter C2 is located affects local topology, which may contribute to the promoter repression. This chain is Histone-like protein p6 (6), found in Bacillus phage PZA (Bacteriophage PZA).